Reading from the N-terminus, the 215-residue chain is Pyrrolidone-carboxylate peptidase (215 aa).

Catalysis depends on residues glutamate 80, cysteine 143, and histidine 167.

The protein belongs to the peptidase C15 family. As to quaternary structure, homotetramer.

It is found in the cytoplasm. It catalyses the reaction Release of an N-terminal pyroglutamyl group from a polypeptide, the second amino acid generally not being Pro.. Removes 5-oxoproline from various penultimate amino acid residues except L-proline. The protein is Pyrrolidone-carboxylate peptidase of Bacillus cereus (strain G9842).